Here is a 222-residue protein sequence, read N- to C-terminus: Ribonuclease 3 (222 aa).

An N-terminal signal peptide occupies residues 1–19 (MKFFIFILALQQLYVQSFA). Glutamine 30 is an RNA binding site. The cysteines at positions 36 and 42 are disulfide-linked. RNA contacts are provided by residues histidine 57, phenylalanine 107, 110 to 111 (HE), and 114 to 115 (KH). The Proton donor role is filled by histidine 57. Intrachain disulfides connect cysteine 72–cysteine 118, cysteine 178–cysteine 213, and cysteine 194–cysteine 205. The active site involves glutamate 111. Histidine 115 serves as the catalytic Proton acceptor.

The protein belongs to the RNase T2 family.

The enzyme catalyses a ribonucleotidyl-ribonucleotide-RNA + H2O = a 3'-end 3'-phospho-ribonucleotide-RNA + a 5'-end dephospho-ribonucleoside-RNA + H(+). Functionally, may remobilize phosphate, particularly when cells senesce or when phosphate becomes limiting. In Arabidopsis thaliana (Mouse-ear cress), this protein is Ribonuclease 3 (RNS3).